The following is a 499-amino-acid chain: Glycerol kinase (499 aa).

Position 11 (Thr-11) interacts with ADP. The ATP site is built by Thr-11, Ser-12, and Ser-13. Residue Thr-11 coordinates sn-glycerol 3-phosphate. ADP is bound at residue Arg-15. Residues Arg-81, Glu-82, Tyr-133, and Asp-242 each coordinate sn-glycerol 3-phosphate. Glycerol is bound by residues Arg-81, Glu-82, Tyr-133, Asp-242, and Gln-243. ADP contacts are provided by Thr-264 and Gly-309. Positions 264, 309, 313, and 414 each coordinate ATP. 2 residues coordinate ADP: Gly-414 and Asn-418.

Belongs to the FGGY kinase family.

The catalysed reaction is glycerol + ATP = sn-glycerol 3-phosphate + ADP + H(+). It functions in the pathway polyol metabolism; glycerol degradation via glycerol kinase pathway; sn-glycerol 3-phosphate from glycerol: step 1/1. With respect to regulation, inhibited by fructose 1,6-bisphosphate (FBP). In terms of biological role, key enzyme in the regulation of glycerol uptake and metabolism. Catalyzes the phosphorylation of glycerol to yield sn-glycerol 3-phosphate. In Methylibium petroleiphilum (strain ATCC BAA-1232 / LMG 22953 / PM1), this protein is Glycerol kinase.